An 814-amino-acid polypeptide reads, in one-letter code: Probable G-protein coupled receptor 156 (814 aa).

The Extracellular segment spans residues 1–47 (MEPEINCSELCDSFPGQELDRRPLHDLCKTTITSSHHSSKTISSLSP). N-linked (GlcNAc...) asparagine glycosylation occurs at Asn6. A helical transmembrane segment spans residues 48–68 (VLLGIVWTFLSCGLLLILFFL). The Cytoplasmic segment spans residues 69-86 (AFTIHCRKNRIVKMSSPN). A helical transmembrane segment spans residues 87 to 107 (LNIVTLLGSCLTYSSAYLFGI). Topologically, residues 108–118 (QDVLVGSSMET) are extracellular. Residues 119 to 139 (LIQTRLSMLCIGTSLVFGPIL) form a helical membrane-spanning segment. The Cytoplasmic segment spans residues 140–164 (GKSWRLYKVFTQRVPDKRVIIKDLQ). The helical transmembrane segment at 165 to 185 (LLGLVAALLMADVILLMTWVL) threads the bilayer. The Extracellular segment spans residues 186 to 222 (TDPIQCLQILSVSMTVTGKDVSCTSTSTHFCASRYSD). The chain crosses the membrane as a helical span at residues 223–243 (VWIALIWGCKGLLLLYGAYLA). Residues 244 to 257 (GLTGHVSSPPVNQS) lie on the Cytoplasmic side of the membrane. The helical transmembrane segment at 258–278 (LTIMVGVNLLVLAAGLLFVVT) threads the bilayer. The Extracellular segment spans residues 279-288 (RYLHSWPNLV). Residues 289-309 (FGLTSGGIFVCTTTINCFIFI) form a helical membrane-spanning segment. Residues 310–814 (PQLKQWKAFE…FKDDLKPTLV (505 aa)) are Cytoplasmic-facing. Residues 354 to 390 (EKSSMERLLTEKNAVIESLQEQVNNAKEKIVRLMSAE) are a coiled coil. Disordered stretches follow at residues 422–545 (AQGP…SSVI), 557–724 (GLGP…PEQW), and 769–792 (SSSD…LASW). Residues 443–454 (SQCTSGPSSYAQ) are compositionally biased toward polar residues. A compositionally biased stretch (basic and acidic residues) spans 468–484 (GKEEKISDSKDFSDHLD). Residues 486-496 (GCSQKPWTEQS) show a composition bias toward polar residues. Basic and acidic residues predominate over residues 523-545 (QRQRHLENSEEPPERRSRVSSVI). Over residues 563–581 (SLSTAPSCHQQTWKNSAAF) the composition is skewed to polar residues. Positions 599 to 610 (VRRRRAAQRARS) are enriched in basic residues. The span at 639–651 (NGDSPSLAPQTTD) shows a compositional bias: polar residues. A compositionally biased stretch (low complexity) spans 769-780 (SSSDSSDSGTSD).

It belongs to the G-protein coupled receptor 3 family. GABA-B receptor subfamily. In terms of tissue distribution, ubiquitous expression both in the CNS and in peripheral tissues. Very high expression in fetal brain and testis relative to expression in other tissues.

Its subcellular location is the cell membrane. In terms of biological role, orphan G-protein coupled receptor involved in the regulation of hair cell orientation in mechanosensory organs of the inner ear. It is required to trigger a 180 degree reversal in hair cell orientation, creating a virtual line of polarity reversal (LPR) across which stereociliary bundles are arranged in opposite orientations. This is Probable G-protein coupled receptor 156 (GPR156) from Homo sapiens (Human).